The following is a 91-amino-acid chain: RNA-binding protein Hfq (91 aa).

The Sm domain occupies 9-68 (DPFLNALRRERVPVSVYLVNGIKLQGTIESFDQFVVLLRNTVSQMVYKHAISTVVPARNV).

Belongs to the Hfq family. In terms of assembly, homohexamer.

In terms of biological role, RNA chaperone that binds small regulatory RNA (sRNAs) and mRNAs to facilitate mRNA translational regulation in response to envelope stress, environmental stress and changes in metabolite concentrations. Also binds with high specificity to tRNAs. This chain is RNA-binding protein Hfq, found in Stenotrophomonas maltophilia (strain K279a).